The chain runs to 153 residues: MTTPPGWKVSGQNEISRPFDILEAWFHRIVGGGNLTRERDSFGSNYVVKLGFPGSVADPIPYLRRAWLVTRYLHPQLGATYSSKSLDDLRYIIRPLDEQIWLQTTFFVEQGPSATYSSAEDAVSKYLSKSTTTAHWIPATSEFMISPTASSPL.

The protein resides in the nucleus. Its function is as follows. Transcriptional regulator that may regulate the expression of the satratoxin biosynthesis SC2 cluster, one of the 3 clusters involved in the biosynthesis of satratoxins, trichothecene mycotoxins that are associated with human food poisonings. This Stachybotrys chartarum (strain CBS 109288 / IBT 7711) (Toxic black mold) protein is Satratoxin biosynthesis SC2 cluster transcription factor SAT15.